Reading from the N-terminus, the 424-residue chain is Serine hydroxymethyltransferase 1 (424 aa).

Residues L125 and 129–131 (GHL) contribute to the (6S)-5,6,7,8-tetrahydrofolate site. Residue K234 is modified to N6-(pyridoxal phosphate)lysine.

This sequence belongs to the SHMT family. In terms of assembly, homodimer. Pyridoxal 5'-phosphate serves as cofactor.

It localises to the cytoplasm. It catalyses the reaction (6R)-5,10-methylene-5,6,7,8-tetrahydrofolate + glycine + H2O = (6S)-5,6,7,8-tetrahydrofolate + L-serine. It participates in one-carbon metabolism; tetrahydrofolate interconversion. It functions in the pathway amino-acid biosynthesis; glycine biosynthesis; glycine from L-serine: step 1/1. Catalyzes the reversible interconversion of serine and glycine with tetrahydrofolate (THF) serving as the one-carbon carrier. This reaction serves as the major source of one-carbon groups required for the biosynthesis of purines, thymidylate, methionine, and other important biomolecules. Also exhibits THF-independent aldolase activity toward beta-hydroxyamino acids, producing glycine and aldehydes, via a retro-aldol mechanism. This Burkholderia lata (strain ATCC 17760 / DSM 23089 / LMG 22485 / NCIMB 9086 / R18194 / 383) protein is Serine hydroxymethyltransferase 1.